The sequence spans 123 residues: Small ribosomal subunit protein uS12 (123 aa).

The protein belongs to the universal ribosomal protein uS12 family. In terms of assembly, part of the 30S ribosomal subunit. Contacts proteins S8 and S17. May interact with IF1 in the 30S initiation complex.

Functionally, with S4 and S5 plays an important role in translational accuracy. Interacts with and stabilizes bases of the 16S rRNA that are involved in tRNA selection in the A site and with the mRNA backbone. Located at the interface of the 30S and 50S subunits, it traverses the body of the 30S subunit contacting proteins on the other side and probably holding the rRNA structure together. The combined cluster of proteins S8, S12 and S17 appears to hold together the shoulder and platform of the 30S subunit. The polypeptide is Small ribosomal subunit protein uS12 (Corynebacterium diphtheriae (strain ATCC 700971 / NCTC 13129 / Biotype gravis)).